We begin with the raw amino-acid sequence, 64 residues long: Large ribosomal subunit protein bL33 (64 aa).

Belongs to the bacterial ribosomal protein bL33 family.

The sequence is that of Large ribosomal subunit protein bL33 from Nostoc punctiforme (strain ATCC 29133 / PCC 73102).